A 69-amino-acid chain; its full sequence is Cell division protein ZapB (69 aa).

Positions 6 to 68 (LEQLEARVQS…LGKMDQMNSE (63 aa)) form a coiled coil.

This sequence belongs to the ZapB family. Homodimer. The ends of the coiled-coil dimer bind to each other, forming polymers. Interacts with FtsZ.

It localises to the cytoplasm. Its function is as follows. Non-essential, abundant cell division factor that is required for proper Z-ring formation. It is recruited early to the divisome by direct interaction with FtsZ, stimulating Z-ring assembly and thereby promoting cell division earlier in the cell cycle. Its recruitment to the Z-ring requires functional FtsA or ZipA. The chain is Cell division protein ZapB from Tolumonas auensis (strain DSM 9187 / NBRC 110442 / TA 4).